A 239-amino-acid chain; its full sequence is LexA repressor (239 aa).

A DNA-binding region (H-T-H motif) is located at residues 26 to 46 (FDEMKDALDLASKSGIHRLIT). Active-site for autocatalytic cleavage activity residues include S159 and K197.

Belongs to the peptidase S24 family. As to quaternary structure, homodimer.

It catalyses the reaction Hydrolysis of Ala-|-Gly bond in repressor LexA.. In terms of biological role, represses a number of genes involved in the response to DNA damage (SOS response), including recA and lexA. In the presence of single-stranded DNA, RecA interacts with LexA causing an autocatalytic cleavage which disrupts the DNA-binding part of LexA, leading to derepression of the SOS regulon and eventually DNA repair. The protein is LexA repressor of Rhizobium etli (strain ATCC 51251 / DSM 11541 / JCM 21823 / NBRC 15573 / CFN 42).